A 307-amino-acid chain; its full sequence is B3 domain-containing protein At5g18000 (307 aa).

The TF-B3 1 DNA-binding region spans 20-115; the sequence is FFKILRREDH…CFNVTIFEAD (96 aa). Disordered regions lie at residues 122–141 and 151–209; these read PRKTITSSSGRNKREERKSI and IESW…SEAG. A compositionally biased stretch (polar residues) spans 166–177; that stretch reads ESTSGRLTQKQE. Residues 178-192 are compositionally biased toward basic and acidic residues; it reads LNLRKKEADKTEKSK. The TF-B3 2 DNA-binding region spans 214 to 307; that stretch reads IPEFKLTIKK…TEMRVKVSKE (94 aa).

It is found in the nucleus. This Arabidopsis thaliana (Mouse-ear cress) protein is B3 domain-containing protein At5g18000.